The following is a 497-amino-acid chain: GTPase-activating protein GYP8 (497 aa).

One can recognise a Rab-GAP TBC domain in the interval 69–281 (FVNNSLRKDC…QIFDMTISMQ (213 aa)).

The polypeptide is GTPase-activating protein GYP8 (GYP8) (Saccharomyces cerevisiae (strain ATCC 204508 / S288c) (Baker's yeast)).